The sequence spans 101 residues: Chaperone modulatory protein CbpM (101 aa).

This sequence belongs to the CbpM family.

Functionally, interacts with CbpA and inhibits both the DnaJ-like co-chaperone activity and the DNA binding activity of CbpA. Together with CbpA, modulates the activity of the DnaK chaperone system. Does not inhibit the co-chaperone activity of DnaJ. The sequence is that of Chaperone modulatory protein CbpM from Pseudomonas entomophila (strain L48).